A 486-amino-acid polypeptide reads, in one-letter code: Phosphomethylpyrimidine synthase (486 aa).

Substrate contacts are provided by residues Asn80, Met109, Tyr139, His175, 195-197 (SRG), 236-239 (DSLR), and Glu275. A Zn(2+)-binding site is contributed by His279. Tyr329 is a binding site for substrate. His370 is a binding site for Zn(2+). The [4Fe-4S] cluster site is built by Cys450, Cys453, and Cys458.

It belongs to the ThiC family. [4Fe-4S] cluster serves as cofactor.

The catalysed reaction is 5-amino-1-(5-phospho-beta-D-ribosyl)imidazole + S-adenosyl-L-methionine = 4-amino-2-methyl-5-(phosphooxymethyl)pyrimidine + CO + 5'-deoxyadenosine + formate + L-methionine + 3 H(+). The protein operates within cofactor biosynthesis; thiamine diphosphate biosynthesis. Its function is as follows. Catalyzes the synthesis of the hydroxymethylpyrimidine phosphate (HMP-P) moiety of thiamine from aminoimidazole ribotide (AIR) in a radical S-adenosyl-L-methionine (SAM)-dependent reaction. This is Phosphomethylpyrimidine synthase from Trichodesmium erythraeum (strain IMS101).